We begin with the raw amino-acid sequence, 886 residues long: MNLQEFKQKYNYDVATKMMQQYLDIKFAHLDCLLLFRMGDFYEMFYEDAILASNVLGIALTKRGKNGEEEIAMCGVPYHALENYLTKLIEENYKVAICDQLETPEEAKNRGGYKAVVTRDVTRIITPGTIIEENLIASAEPNYLASLVITKNKETASLCYVDLSTSEIFVVNVPEAEILNELARLKPREILLSENLRSSNLADSIFKQLNFRITYQVDSFFAINKCEKIILDFYKMKDIKGIGEISSSQICAIGSILEYLSLTQKQNIPHLPIPRIINFHSYMTIDFATRRNLEIVTNSQGTLKGSLLNTLNHTVTKQGGRLLYNFLSSPLTNIAKINHRLNITEFFYSNLEIVKRIRELLKKTSDIERCLTRITMNRSSGRDLLSIKYTLEAATIIKGVFFDAYGFNLPDFIEKIIKPLSGDAELYNLIDESIREDAPNNLNDGGIIKHEYHPKVAQLHDLINNGKLHIEKLKDQYCKETGIDSLKISHNNVIGLFIDITAKNVNKILDPKFIHRQTTVNSVRYTTTELQKLESELANAKTLVISLEKELYADICNQVIEKASYLRMLASSLSGLDVFCNFAYIADEYDYVKPEFTDDLSFDIVKGRHPVVEKALKRESKSFVYNDCHLSEFERIWLITGPNMAGKSTFLRQNAIIAIIAQIGSFVPAKSAKIGVVDKIFSRIGAADDLIRGQSTFMAEMLETSAILAQSTKNSLIILDEVGRGTSTYDGVSIAWSVLEYIHDKLKCRCLFATHYHELTVMSNFLPALQNYTIAIEESGKDILFLHNIISGAADRSYGIHVAALAGLPASVINRAEQILLKFEKTSTGKGKNILSTESNNLSLFNLEPNKTTISSKLDEQFRTIAPDKLSPKEALELIYELKKLV.

Residue 641–648 (GPNMAGKS) participates in ATP binding.

It belongs to the DNA mismatch repair MutS family.

Its function is as follows. This protein is involved in the repair of mismatches in DNA. It is possible that it carries out the mismatch recognition step. This protein has a weak ATPase activity. This Rickettsia felis (strain ATCC VR-1525 / URRWXCal2) (Rickettsia azadi) protein is DNA mismatch repair protein MutS.